The primary structure comprises 595 residues: Aspartate--tRNA(Asp/Asn) ligase (595 aa).

Glu175 is a binding site for L-aspartate. The tract at residues 199-202 is aspartate; that stretch reads QQFK. Positions 221 and 451 each coordinate L-aspartate. 221-223 is an ATP binding site; sequence RDE. An ATP-binding site is contributed by Glu485. An L-aspartate-binding site is contributed by Arg492. 537 to 540 is an ATP binding site; the sequence is GVDR.

The protein belongs to the class-II aminoacyl-tRNA synthetase family. Type 1 subfamily. In terms of assembly, homodimer.

It is found in the cytoplasm. The catalysed reaction is tRNA(Asx) + L-aspartate + ATP = L-aspartyl-tRNA(Asx) + AMP + diphosphate. In terms of biological role, aspartyl-tRNA synthetase with relaxed tRNA specificity since it is able to aspartylate not only its cognate tRNA(Asp) but also tRNA(Asn). Reaction proceeds in two steps: L-aspartate is first activated by ATP to form Asp-AMP and then transferred to the acceptor end of tRNA(Asp/Asn). The sequence is that of Aspartate--tRNA(Asp/Asn) ligase from Acidiphilium cryptum (strain JF-5).